The following is a 333-amino-acid chain: Ferredoxin--NADP reductase (333 aa).

Asp32, Gln40, Tyr45, Ala85, Phe119, Asp285, and Thr326 together coordinate FAD.

Belongs to the ferredoxin--NADP reductase type 2 family. As to quaternary structure, homodimer. FAD serves as cofactor.

It carries out the reaction 2 reduced [2Fe-2S]-[ferredoxin] + NADP(+) + H(+) = 2 oxidized [2Fe-2S]-[ferredoxin] + NADPH. This is Ferredoxin--NADP reductase from Neorickettsia sennetsu (strain ATCC VR-367 / Miyayama) (Ehrlichia sennetsu).